The sequence spans 577 residues: MRFKIRGPLIQLRYKSTKAFYITTPIFYVNAAPHIGHLYSMLIADTRNKWEKLNPSKESFMLTGTDEHGLKIQSTAEKLGLEPKVLVDKVSQNFSKLAEQFDVNYDRFIRTTDNDHIELVRYFWNLMMEKGFIYTDTHSGWYSISDETFFPETQIEEVVKNGKAVKISSETKNEVVYQEETNYFFKLSMFQEQLIQFLKQNPEFIKPKHRYQFILKELEDTKLPDLSISRPSSRLKWSIEVPNDSTQKIYVWFDALLNYLTATKFPHGFEVQDSKFVTPENSIWPATHVIGKDIIRFHCIYWPIFLMAAGIELPKQVIVHSHWLCDGFKMSKSLGNLVDPMEISEYYGVDPVRFFLVENSNIDDDCKFSEELLQRSRDAVLGKYCNLISRIGGKNFSIEEAVKSFASGEFNNIREIIETYTINKDSVEGLLSSLNKLTTDLNDLYNQMDHYFTNFDYIRAIQCWWSVINQANQIFQSAEPWTYVKLINSPETPAELKEKYRILNNYFVYLCAETTRISSILIQPVMPQLSKKILDRLNVSGRTSEFTTLSADLQYGSGANSKSHKVPLEKIAPRDIK.

A 'HIGH' region motif is present at residues 25–37; it reads PIFYVNAAPHIGH. The 'KMSKS' region motif lies at 329 to 333; that stretch reads KMSKS. Residue K332 coordinates ATP.

This sequence belongs to the class-I aminoacyl-tRNA synthetase family.

It is found in the mitochondrion matrix. The catalysed reaction is tRNA(Met) + L-methionine + ATP = L-methionyl-tRNA(Met) + AMP + diphosphate. The chain is Methionine--tRNA ligase, mitochondrial (MSM1) from Candida albicans (Yeast).